The primary structure comprises 518 residues: Probable cyclic di-GMP phosphodiesterase PdeN (518 aa).

The next 2 membrane-spanning stretches (helical) occupy residues Cys-16 to Trp-36 and Val-236 to Tyr-256. The region spanning Arg-261–Tyr-514 is the EAL domain.

Its subcellular location is the cell inner membrane. It carries out the reaction 3',3'-c-di-GMP + H2O = 5'-phosphoguanylyl(3'-&gt;5')guanosine + H(+). In terms of biological role, phosphodiesterase (PDE) that catalyzes the hydrolysis of cyclic-di-GMP (c-di-GMP) to 5'-pGpG. This chain is Probable cyclic di-GMP phosphodiesterase PdeN, found in Escherichia coli (strain K12).